Here is a 401-residue protein sequence, read N- to C-terminus: Voltage-gated potassium channel subunit beta-1 (401 aa).

4 residues coordinate NADP(+): threonine 90, tryptophan 91, glutamine 97, and aspartate 119. Tyrosine 124 serves as the catalytic Proton donor/acceptor. NADP(+)-binding residues include asparagine 192, serine 222, arginine 223, glutamine 248, tryptophan 277, serine 278, proline 279, leucine 280, alanine 281, cysteine 282, lysine 288, arginine 298, glycine 357, serine 359, glutamine 363, glutamate 366, and asparagine 367.

Belongs to the shaker potassium channel beta subunit family. In terms of assembly, homotetramer. Interaction with tetrameric potassium channel alpha subunits gives rise to a heterooctamer.

The protein resides in the cytoplasm. It is found in the membrane. It localises to the cell membrane. The enzyme catalyses a primary alcohol + NADP(+) = an aldehyde + NADPH + H(+). It catalyses the reaction a secondary alcohol + NADP(+) = a ketone + NADPH + H(+). Its function is as follows. Regulatory subunit of the voltage-gated potassium (Kv) channels composed of pore-forming and potassium-conducting alpha subunits and of regulatory beta subunits. The beta-1/KCNAB1 cytoplasmic subunit mediates closure of delayed rectifier potassium channels by physically obstructing the pore via its N-terminal domain and increases the speed of channel closure for other family members. Promotes the inactivation of KCNA1, KCNA2, KCNA4, KCNA5 and KCNA6 alpha subunit-containing channels. Displays nicotinamide adenine dinucleotide phosphate (NADPH)-dependent aldoketoreductase activity by catalyzing the NADPH-dependent reduction of a variety of endogenous aldehydes and ketones. The binding of NADPH is required for efficient down-regulation of potassium channel activity. Oxidation of the bound NADPH restrains N-terminal domain from blocking the channel, thereby decreasing N-type inactivation of potassium channel activity. This Gallus gallus (Chicken) protein is Voltage-gated potassium channel subunit beta-1 (KCNAB1).